Consider the following 389-residue polypeptide: Succinate--CoA ligase [ADP-forming] subunit beta (389 aa).

An ATP-grasp domain is found at 9–244 (KQLFADYGLP…PSQEDERERR (236 aa)). Residues Lys-46, 53-55 (GRG), Glu-99, Thr-102, and Glu-107 each bind ATP. Asn-199 and Asp-213 together coordinate Mg(2+). Residues Asn-264 and 321 to 323 (GIV) contribute to the substrate site.

This sequence belongs to the succinate/malate CoA ligase beta subunit family. Heterotetramer of two alpha and two beta subunits. It depends on Mg(2+) as a cofactor.

It carries out the reaction succinate + ATP + CoA = succinyl-CoA + ADP + phosphate. It catalyses the reaction GTP + succinate + CoA = succinyl-CoA + GDP + phosphate. Its pathway is carbohydrate metabolism; tricarboxylic acid cycle; succinate from succinyl-CoA (ligase route): step 1/1. Succinyl-CoA synthetase functions in the citric acid cycle (TCA), coupling the hydrolysis of succinyl-CoA to the synthesis of either ATP or GTP and thus represents the only step of substrate-level phosphorylation in the TCA. The beta subunit provides nucleotide specificity of the enzyme and binds the substrate succinate, while the binding sites for coenzyme A and phosphate are found in the alpha subunit. In Alcanivorax borkumensis (strain ATCC 700651 / DSM 11573 / NCIMB 13689 / SK2), this protein is Succinate--CoA ligase [ADP-forming] subunit beta.